Consider the following 172-residue polypeptide: Transcriptional repressor NrdR (172 aa).

Residues 3-34 (CPFCSYSDNRVLESRLAEEGESVRRRRECKQC) fold into a zinc finger. The ATP-cone domain occupies 49–139 (TVVIKRNGRR…VYRKFKGVAD (91 aa)).

Belongs to the NrdR family. Requires Zn(2+) as cofactor.

Negatively regulates transcription of bacterial ribonucleotide reductase nrd genes and operons by binding to NrdR-boxes. This is Transcriptional repressor NrdR from Gloeobacter violaceus (strain ATCC 29082 / PCC 7421).